The chain runs to 872 residues: MKELSSAQIRQMWLDFWKSKGHSVEPSANLVPVNDPTLLWINSGVATLKKYFDGSVIPENPRITNAQKSIRTNDIENVGKTARHHTMFEMLGNFSIGDYFRDEAIEWGFELLTSPEWFDFPKDKLYMTYYPDDKDSYNRWIACGVEPSHLVPIEDNFWEIGAGPSGPDTEIFFDRGEDFDPENIGLRLLAEDIENDRYIEIWNIVLSQFNADPAVPRSEYKELPNKNIDTGAGLERLAAVMQGAKTNFETDLFMPIIREVEKLSGKTYDPDGDNMSFKVIADHIRALSFAIGDGALPGNEGRGYVLRRLLRRAVMHGRRLGINETFLYKLVPTVGQIMESYYPEVLEKRDFIEKIVKREEETFARTIDAGSGHLDSLLAQLKAEGKDTLEGKDIFKLYDTYGFPVELTEELAEDAGYKIDHEGFKSAMKEQQDRARAAVVKGGSMGMQNETLAGIVEESRFEYDTYSLESSLSVIIADNERTEAVSEGQALLVFAQTPFYAEMGGQVADHGVIKNDKGDTVAEVVDVQKAPNGQPLHTVNVLASLSVGTNYTLEINKERRLAVEKNHTATHLLHAALHNVIGEHATQAGSLNEEEFLRFDFTHFEAVSNEELRHIEQEVNEQIWNDLTITTTETDVETAKEMGAMALFGEKYGKVVRVVQIGNYSVELCGGTHLNNSSEIGLFKIVKEEGIGSGTRRIIAVTGRQAFEAYRNQEDALKEIAATVKAPQLKDAAAKVQALSDSLRDLQKENVELKEKAAAAAAGDVFKDIQEAKGVRFIASQVDVADAGALRTFADNWKQKDYSDVLVLVAAIGEKVNVLVASKTKDVHAGNMIKGLAPIVAGRGGGKPDMAMAGGSDASKIAELLAAVAENL.

4 residues coordinate Zn(2+): His567, His571, Cys669, and His673.

It belongs to the class-II aminoacyl-tRNA synthetase family. It depends on Zn(2+) as a cofactor.

It is found in the cytoplasm. The enzyme catalyses tRNA(Ala) + L-alanine + ATP = L-alanyl-tRNA(Ala) + AMP + diphosphate. Functionally, catalyzes the attachment of alanine to tRNA(Ala) in a two-step reaction: alanine is first activated by ATP to form Ala-AMP and then transferred to the acceptor end of tRNA(Ala). Also edits incorrectly charged Ser-tRNA(Ala) and Gly-tRNA(Ala) via its editing domain. This is Alanine--tRNA ligase from Streptococcus agalactiae serotype V (strain ATCC BAA-611 / 2603 V/R).